The following is a 197-amino-acid chain: 3-isopropylmalate dehydratase small subunit (197 aa).

The protein belongs to the LeuD family. LeuD type 1 subfamily. In terms of assembly, heterodimer of LeuC and LeuD.

It catalyses the reaction (2R,3S)-3-isopropylmalate = (2S)-2-isopropylmalate. Its pathway is amino-acid biosynthesis; L-leucine biosynthesis; L-leucine from 3-methyl-2-oxobutanoate: step 2/4. Catalyzes the isomerization between 2-isopropylmalate and 3-isopropylmalate, via the formation of 2-isopropylmaleate. The protein is 3-isopropylmalate dehydratase small subunit of Geobacillus sp. (strain WCH70).